Reading from the N-terminus, the 211-residue chain is Small ribosomal subunit protein uS3 (211 aa).

One can recognise a KH type-2 domain in the interval 38–106 (LRKFIKKAFY…NIELNIIEVK (69 aa)).

Belongs to the universal ribosomal protein uS3 family. As to quaternary structure, part of the 30S ribosomal subunit. Forms a tight complex with proteins S10 and S14.

In terms of biological role, binds the lower part of the 30S subunit head. Binds mRNA in the 70S ribosome, positioning it for translation. In Ehrlichia canis (strain Jake), this protein is Small ribosomal subunit protein uS3.